Reading from the N-terminus, the 250-residue chain is Adenosylcobinamide-GDP ribazoletransferase (250 aa).

The next 6 helical transmembrane spans lie at 32-52 (KGIIYFPVVGGIIGALLMVAY), 59-79 (LAHSLSALLTVGFFVFLTGGL), 113-133 (GVLAMVFILLLKLYGIQGLGE), 136-156 (IYWGIILMPVMGRQAIVYGCY), 185-205 (LTFILAAMHLPSLIFALLLPI), and 230-250 (CELTEGCYLLFILLITGAGLF).

It belongs to the CobS family. The cofactor is Mg(2+).

The protein localises to the cell membrane. It catalyses the reaction alpha-ribazole + adenosylcob(III)inamide-GDP = adenosylcob(III)alamin + GMP + H(+). It carries out the reaction alpha-ribazole 5'-phosphate + adenosylcob(III)inamide-GDP = adenosylcob(III)alamin 5'-phosphate + GMP + H(+). It participates in cofactor biosynthesis; adenosylcobalamin biosynthesis; adenosylcobalamin from cob(II)yrinate a,c-diamide: step 7/7. Functionally, joins adenosylcobinamide-GDP and alpha-ribazole to generate adenosylcobalamin (Ado-cobalamin). Also synthesizes adenosylcobalamin 5'-phosphate from adenosylcobinamide-GDP and alpha-ribazole 5'-phosphate. This chain is Adenosylcobinamide-GDP ribazoletransferase, found in Alkaliphilus metalliredigens (strain QYMF).